Consider the following 482-residue polypeptide: Methylenetetrahydrofolate--tRNA-(uracil-5-)-methyltransferase TrmFO (482 aa).

Gly11 to Gly16 contributes to the FAD binding site. The disordered stretch occupies residues Leu450 to Glu482.

The protein belongs to the MnmG family. TrmFO subfamily. Requires FAD as cofactor.

Its subcellular location is the cytoplasm. The enzyme catalyses uridine(54) in tRNA + (6R)-5,10-methylene-5,6,7,8-tetrahydrofolate + NADH + H(+) = 5-methyluridine(54) in tRNA + (6S)-5,6,7,8-tetrahydrofolate + NAD(+). It catalyses the reaction uridine(54) in tRNA + (6R)-5,10-methylene-5,6,7,8-tetrahydrofolate + NADPH + H(+) = 5-methyluridine(54) in tRNA + (6S)-5,6,7,8-tetrahydrofolate + NADP(+). Functionally, catalyzes the folate-dependent formation of 5-methyl-uridine at position 54 (M-5-U54) in all tRNAs. The chain is Methylenetetrahydrofolate--tRNA-(uracil-5-)-methyltransferase TrmFO from Rhodospirillum rubrum (strain ATCC 11170 / ATH 1.1.1 / DSM 467 / LMG 4362 / NCIMB 8255 / S1).